Consider the following 358-residue polypeptide: Protein phosphatase 1 regulatory subunit 3G (358 aa).

The tract at residues 1–71 (MEPIGARLSL…KEEAAPQEQE (71 aa)) is disordered. Residues 11–29 (EAPGPAPFREAPPAEELPA) show a composition bias toward low complexity. Residue Ser-86 is modified to Phosphoserine. The 141-residue stretch at 210-350 (AERLQRQRVC…NNAGANYTLR (141 aa)) folds into the CBM21 domain. Over residues 270 to 280 (EPLEPQQPEAP) the composition is skewed to low complexity. The tract at residues 270 to 295 (EPLEPQQPEAPSGASEPGSGDAKKEP) is disordered.

Its function is as follows. Glycogen-targeting subunit for protein phosphatase 1 (PP1). Involved in the regulation of hepatic glycogenesis in a manner coupled to the fasting-feeding cycle and distinct from other glycogen-targeting subunits. The sequence is that of Protein phosphatase 1 regulatory subunit 3G (PPP1R3G) from Homo sapiens (Human).